Consider the following 655-residue polypeptide: p-hydroxybenzoic acid efflux pump subunit AaeB (655 aa).

The Periplasmic segment spans residues 1–12 (MGIFSIANQHIR). A helical transmembrane segment spans residues 13-33 (FAVKLACAIVLALFIGFHFQL). Residues 34 to 37 (ETPR) lie on the Cytoplasmic side of the membrane. Residues 38 to 58 (WAVLTAAIVAAGPAFAAGGEP) traverse the membrane as a helical segment. The Periplasmic segment spans residues 59 to 68 (YSGAIRYRGM). Residues 69–89 (LRIIGTFIGCIAALIIIISMI) form a helical membrane-spanning segment. The Cytoplasmic segment spans residues 90–92 (RAP). A helical transmembrane segment spans residues 93–113 (LLMILVCCVWAGFCTWISSLV). Residues 114–120 (RIENSYA) are Periplasmic-facing. The chain crosses the membrane as a helical span at residues 121–141 (WGLSGYTALIIVITIQTEPLL). The Cytoplasmic segment spans residues 142–151 (TPQFALERCS). Residues 152 to 172 (EIVIGIGCAILADLLFSPRSI) form a helical membrane-spanning segment. Topologically, residues 173 to 369 (KQEVDRELDC…RTTLSCILGT (197 aa)) are periplasmic. A helical membrane pass occupies residues 370-390 (LFWLWTGWTSGNGAMVMIAVV). Over 391 to 406 (TSLAMRLPNPRMVCID) the chain is Cytoplasmic. A helical membrane pass occupies residues 407–427 (FIYGTLAALPLGLLYFLVIIP). Residues 428 to 430 (NTQ) are Periplasmic-facing. Residues 431–451 (QSMLLLCLSLAVLGFFIGIEV) form a helical membrane-spanning segment. Over 452–459 (QKRRLGSM) the chain is Cytoplasmic. A helical transmembrane segment spans residues 460 to 480 (GALASTINIIVLDNPMTFHFI). Position 481 (Q481) is a topological domain, periplasmic. The chain crosses the membrane as a helical span at residues 482–502 (FLDSALGQIVGCMLAFIVILL). Topologically, residues 503–655 (VRDKSKDRTG…HKYQNALTDS (153 aa)) are cytoplasmic.

It belongs to the aromatic acid exporter ArAE (TC 2.A.85) family.

It is found in the cell inner membrane. Its function is as follows. Forms an efflux pump with AaeA. Could function as a metabolic relief valve, allowing to eliminate certain compounds when they accumulate to high levels in the cell. The sequence is that of p-hydroxybenzoic acid efflux pump subunit AaeB from Salmonella typhi.